We begin with the raw amino-acid sequence, 158 residues long: Pyruvoyl-dependent arginine decarboxylase (158 aa).

Serine 44 is modified (pyruvic acid (Ser)).

Belongs to the PdaD family. Pyruvate serves as cofactor.

The enzyme catalyses L-arginine + H(+) = agmatine + CO2. The sequence is that of Pyruvoyl-dependent arginine decarboxylase from Pyrococcus furiosus (strain ATCC 43587 / DSM 3638 / JCM 8422 / Vc1).